We begin with the raw amino-acid sequence, 338 residues long: MNGWEKTVRIAIDAMGGDYAPQEIVQGALLARAQLGVDIVLVGSAEAVLPELRRHNAAQSVEIVDAPEQVGMGEEPTIVRRKPNSSIMVTMDLVKQGRAEAAVAAGNTGAAMAAALFRIGRLPGIERPAIGAMLPTLKLGKRVLLLDVGANTDSRPRFLEQFALMGALYSRYVLGVAEPKVGLLNIGEERGKGNELVADAYEMLVKNPHVPFAGNCEGRDVMTGRFDVVVCDGFMGNVLLKFAEGVGLVALQILREELPRGIPGKIGIALMRNNLGQVKQRMDYAAYGGGLLLGVNGVCIIAHGSSKAQGILSAIRLAKEALDNRVLERIQQQLILPM.

Belongs to the PlsX family. Homodimer. Probably interacts with PlsY.

Its subcellular location is the cytoplasm. The catalysed reaction is a fatty acyl-[ACP] + phosphate = an acyl phosphate + holo-[ACP]. The protein operates within lipid metabolism; phospholipid metabolism. Catalyzes the reversible formation of acyl-phosphate (acyl-PO(4)) from acyl-[acyl-carrier-protein] (acyl-ACP). This enzyme utilizes acyl-ACP as fatty acyl donor, but not acyl-CoA. The sequence is that of Phosphate acyltransferase from Gloeobacter violaceus (strain ATCC 29082 / PCC 7421).